We begin with the raw amino-acid sequence, 296 residues long: L-fucono-1,5-lactonase (296 aa).

This sequence belongs to the metallo-dependent hydrolases superfamily. As to quaternary structure, monomer. It depends on Does not require a divalent metal for activity. The purified enzyme contains Zn(2+), but the addition of chelators does not diminish the catalytic activity of the enzyme, indicating that it does not require a divalent cation for substrate turnover. as a cofactor.

It carries out the reaction L-fucono-1,5-lactone + H2O = L-fuconate + H(+). It catalyses the reaction L-fucono-1,4-lactone + H2O = L-fuconate + H(+). The catalysed reaction is D-arabinono-1,4-lactone + H2O = D-arabinonate + H(+). The enzyme catalyses L-xylono-1,4-lactone + H2O = L-xylonate + H(+). It carries out the reaction L-galactono-1,4-lactone + H2O = L-galactonate + H(+). It participates in carbohydrate degradation; L-fucose degradation. Functionally, L-fucono-1,5-lactonase involved in an L-fucose degradation pathway. Catalyzes the hydrolysis of L-fucono-1,5-lactone to L-fuconate. L-fucono-1,5-lactone is the best substrate, but the enzyme can also hydrolyze L-fucono-1,4-lactone, L-galactono-1,4-lactone D-arabinono-1,4-lactone and L-xylono-1,4-lactone. In Burkholderia multivorans (strain ATCC 17616 / 249), this protein is L-fucono-1,5-lactonase.